The sequence spans 306 residues: Protein YIPF1 (306 aa).

The Cytoplasmic segment spans residues 1 to 119; it reads MAAVDDLQFE…VRLYIRSNPD (119 aa). Residues 14 to 62 form a disordered region; sequence NAATSLTANPDATTVNIEDPGETPKHQSGSPRGSGREEDDELLGNDDSD. The span at 15–29 shows a compositional bias: polar residues; that stretch reads AATSLTANPDATTVN. Acidic residues predominate over residues 50-59; it reads EEDDELLGND. A helical membrane pass occupies residues 120 to 140; the sequence is LYGPFWICATLVFAIAISGNL. Residues 141 to 162 are Lumenal-facing; that stretch reads SNFLIHLGEKTYRYVPEFRKVS. The chain crosses the membrane as a helical span at residues 163–183; sequence IAATTIYAYAWLVPLALWGFL. The Cytoplasmic portion of the chain corresponds to 184 to 200; that stretch reads MWRNSKVMNIVSYSFLE. The helical transmembrane segment at 201-221 threads the bilayer; it reads IVCVYGYSLFIYIPTAILWII. Topologically, residues 222-227 are lumenal; sequence PQKAVR. Residues 228 to 248 traverse the membrane as a helical segment; the sequence is WILVMIALGISGSVLAMTFWP. Over 249-256 the chain is Cytoplasmic; it reads AVREDNRR. Residues 257 to 277 form a helical membrane-spanning segment; the sequence is VALATIVTIVLLHMLLSVGCL. The Lumenal segment spans residues 278 to 306; sequence AYFFDAPEMDHLPTTTATPNQTVAAAKSS. Asn-297 is a glycosylation site (N-linked (GlcNAc...) asparagine).

The protein belongs to the YIP1 family. Interacts with YIPF6; this interaction may stabilize YIPF1. May also form a ternary complex with YIPF2 and YIPF6.

It localises to the golgi apparatus. It is found in the cis-Golgi network membrane. The protein localises to the trans-Golgi network membrane. Its subcellular location is the late endosome membrane. This chain is Protein YIPF1 (YIPF1), found in Pongo abelii (Sumatran orangutan).